Consider the following 473-residue polypeptide: Ribonuclease Y (473 aa).

The chain crosses the membrane as a helical span at residues 4–24 (LIAFIILLILFVLLITIVPVV). Residues 158-218 (SLFNIDIIDE…IRREIARIVM (61 aa)) enclose the KH domain. The HD domain occupies 285-378 (ILSHSLEVAE…VKIVDTLSAA (94 aa)).

It belongs to the RNase Y family.

Its subcellular location is the cell membrane. Endoribonuclease that initiates mRNA decay. This Ureaplasma parvum serovar 3 (strain ATCC 27815 / 27 / NCTC 11736) protein is Ribonuclease Y.